The primary structure comprises 965 residues: Chondroitin synthase (965 aa).

The segment at 132-418 (FTWYKNRKKS…IVKEKVPYIY (287 aa)) is galactosaminyltransferase; A1 domain. UDP-N-acetyl-alpha-D-galactosamine contacts are provided by residues P158, R162, D189, Y218, R224, and 240-241 (DC). D242 lines the Mn(2+) pocket. Residue 362–363 (ED) participates in UDP-N-acetyl-alpha-D-galactosamine binding. H387 lines the Mn(2+) pocket. The interval 419–683 (RKLLPIEDSH…ESRKYIFNKT (265 aa)) is glucuronosyltransferase; A2 domain. UDP-alpha-D-glucuronate contacts are provided by residues Y442, D470, and 518–521 (QLDS). Position 522 (D522) interacts with Mn(2+). Residues H582 and 604–605 (AV) each bind UDP-alpha-D-glucuronate. H632 contributes to the Mn(2+) binding site.

Belongs to the glycosyltransferase 2 family. CS/HAS subfamily. Mn(2+) serves as cofactor.

The protein localises to the cell membrane. It carries out the reaction 3-O-(beta-D-GlcA-(1-&gt;3)-beta-D-GalNAc-(1-&gt;4)-beta-D-GlcA-(1-&gt;3)-beta-D-Gal-(1-&gt;3)-beta-D-Gal-(1-&gt;4)-beta-D-Xyl)-L-seryl-[protein] + UDP-N-acetyl-alpha-D-galactosamine = 3-O-(beta-D-GalNAc-(1-&gt;4)-beta-D-GlcA-(1-&gt;3)-beta-D-GalNAc-(1-&gt;4)-beta-D-GlcA-(1-&gt;3)-beta-D-Gal-(1-&gt;3)-beta-D-Gal-(1-&gt;4)-beta-D-Xyl)-L-seryl-[protein] + UDP + H(+). The catalysed reaction is 3-O-{beta-D-GlcA-(1-&gt;3)-[beta-D-GalNAc-(1-&gt;4)-beta-D-GlcA-(1-&gt;3)](n)-beta-D-GalNAc-(1-&gt;4)-beta-D-GlcA-(1-&gt;3)-beta-D-Gal-(1-&gt;3)-beta-D-Gal-(1-&gt;4)-beta-D-Xyl}-L-seryl-[protein] + UDP-N-acetyl-alpha-D-galactosamine = 3-O-{[beta-D-GalNAc-(1-&gt;4)-beta-D-GlcA-(1-&gt;3)](n+1)-beta-D-GalNAc-(1-&gt;4)-beta-D-GlcA-(1-&gt;3)-beta-D-Gal-(1-&gt;3)-beta-D-Gal-(1-&gt;4)-beta-D-Xyl}-L-seryl-[protein] + UDP + H(+). It catalyses the reaction 3-O-(beta-D-GalNAc-(1-&gt;4)-beta-D-GlcA-(1-&gt;3)-beta-D-Gal-(1-&gt;3)-beta-D-Gal-(1-&gt;4)-beta-D-Xyl)-L-seryl-[protein] + UDP-alpha-D-glucuronate = 3-O-(beta-D-GlcA-(1-&gt;3)-beta-D-GalNAc-(1-&gt;4)-beta-D-GlcA-(1-&gt;3)-beta-D-Gal-(1-&gt;3)-beta-D-Gal-(1-&gt;4)-beta-D-Xyl)-L-seryl-[protein] + UDP + H(+). The enzyme catalyses 3-O-{[beta-D-GalNAc-(1-&gt;4)-beta-D-GlcA-(1-&gt;3)](n)-beta-D-GalNAc-(1-&gt;4)-beta-D-GlcA-(1-&gt;3)-beta-D-Gal-(1-&gt;3)-beta-D-Gal-(1-&gt;4)-beta-D-Xyl}-L-seryl-[protein] + UDP-alpha-D-glucuronate = 3-O-{beta-D-GlcA-(1-&gt;3)-[beta-D-GalNAc-(1-&gt;4)-beta-D-GlcA-(1-&gt;3)](n)-beta-D-GalNAc-(1-&gt;4)-beta-D-GlcA-(1-&gt;3)-beta-D-Gal-(1-&gt;3)-beta-D-Gal-(1-&gt;4)-beta-D-Xyl}-L-seryl-[protein] + UDP + H(+). Its function is as follows. Glycosyltransferase that catalyzes elongation of chondroitin, a polysaccharide composed of a repeating disaccharide of N-acetylgalactosamine (GalNAc) and glucuronic acid (GlcUA) units, by alternatively transferring the GlcUA and GalNAc moiety from UDP-GlcUA and UDP-GalNAc to the non-reducing ends of the chondroitin chain. Each chondroitin unit has the composition beta-(1-&gt;4)-GlcUA-beta-(1-&gt;3)-GalNAc. This chain is Chondroitin synthase (fcbD), found in Pasteurella multocida (strain Pm70).